A 484-amino-acid chain; its full sequence is Glycogen synthase (484 aa).

Residue Lys15 coordinates ADP-alpha-D-glucose.

Belongs to the glycosyltransferase 1 family. Bacterial/plant glycogen synthase subfamily.

The enzyme catalyses [(1-&gt;4)-alpha-D-glucosyl](n) + ADP-alpha-D-glucose = [(1-&gt;4)-alpha-D-glucosyl](n+1) + ADP + H(+). The protein operates within glycan biosynthesis; glycogen biosynthesis. Synthesizes alpha-1,4-glucan chains using ADP-glucose. This Bacillus subtilis (strain 168) protein is Glycogen synthase (glgA).